The following is an 89-amino-acid chain: Small ribosomal subunit protein uS15 (89 aa).

Belongs to the universal ribosomal protein uS15 family. In terms of assembly, part of the 30S ribosomal subunit. Forms a bridge to the 50S subunit in the 70S ribosome, contacting the 23S rRNA.

Functionally, one of the primary rRNA binding proteins, it binds directly to 16S rRNA where it helps nucleate assembly of the platform of the 30S subunit by binding and bridging several RNA helices of the 16S rRNA. In terms of biological role, forms an intersubunit bridge (bridge B4) with the 23S rRNA of the 50S subunit in the ribosome. The protein is Small ribosomal subunit protein uS15 of Beijerinckia indica subsp. indica (strain ATCC 9039 / DSM 1715 / NCIMB 8712).